The sequence spans 292 residues: [LysW]-aminoadipate kinase (292 aa).

Substrate contacts are provided by Arg89 and Asn193.

It belongs to the acetylglutamate kinase family. LysZ subfamily.

It is found in the cytoplasm. It catalyses the reaction [amino-group carrier protein]-C-terminal-N-(1,4-dicarboxybutan-1-yl)-L-glutamine + ATP = [amino-group carrier protein]-C-terminal-N-(1-carboxy-5-phosphooxy-5-oxopentan-1-yl)-L-glutamine + ADP. It functions in the pathway amino-acid biosynthesis; L-lysine biosynthesis via AAA pathway; L-lysine from L-alpha-aminoadipate (Thermus route): step 2/5. In terms of biological role, catalyzes the phosphorylation of LysW-gamma-alpha-aminoadipate. This chain is [LysW]-aminoadipate kinase, found in Deinococcus radiodurans (strain ATCC 13939 / DSM 20539 / JCM 16871 / CCUG 27074 / LMG 4051 / NBRC 15346 / NCIMB 9279 / VKM B-1422 / R1).